A 343-amino-acid polypeptide reads, in one-letter code: Cyclin-Y-like protein 1-B (343 aa).

The disordered stretch occupies residues 1 to 69 (MGNTVTCCVS…ECNPSDHPQA (69 aa)). Basic and acidic residues predominate over residues 17–28 (AGRDRRVAERGE). Residues 145–267 (DIFDEKLHPL…FLELLQFNIN (123 aa)) form the Cyclin N-terminal domain.

Belongs to the cyclin family. Cyclin Y subfamily.

This is Cyclin-Y-like protein 1-B (ccnyl1-b) from Xenopus laevis (African clawed frog).